Here is a 128-residue protein sequence, read N- to C-terminus: Large ribosomal subunit protein bL12 (128 aa).

The protein belongs to the bacterial ribosomal protein bL12 family. In terms of assembly, homodimer. Part of the ribosomal stalk of the 50S ribosomal subunit. Forms a multimeric L10(L12)X complex, where L10 forms an elongated spine to which 2 to 4 L12 dimers bind in a sequential fashion. Binds GTP-bound translation factors.

Its function is as follows. Forms part of the ribosomal stalk which helps the ribosome interact with GTP-bound translation factors. Is thus essential for accurate translation. This Methylobacillus flagellatus (strain ATCC 51484 / DSM 6875 / VKM B-1610 / KT) protein is Large ribosomal subunit protein bL12.